The chain runs to 424 residues: Virion nicking-joining enzyme (424 aa).

PLD phosphodiesterase domains are found at residues 110-137 and 320-346; these read LGGV…DWRS and YSRV…TGNY.

Belongs to the orthopoxvirus OPG042 family.

Its subcellular location is the virion. DNA nicking enzyme that cleaves extruded cruciform DNA at its tip. Probably nicks viral hairpins. This Homo sapiens (Human) protein is Virion nicking-joining enzyme (OPG042).